Reading from the N-terminus, the 774-residue chain is Beta-xylosidase/alpha-L-arabinofuranosidase 1 (774 aa).

The signal sequence occupies residues 1–33 (ANTKNREPKVSSVFLCFSIFYVTVLLNCNHVYG). Residues Asn48 and Asn136 are each glycosylated (N-linked (GlcNAc...) asparagine). Asp303 is an active-site residue. Residues Asn437 and Asn530 are each glycosylated (N-linked (GlcNAc...) asparagine).

This sequence belongs to the glycoside hydrolase 3 family. In terms of processing, proteolytically cleaved in roots to form a 65 kDa protein.

The protein resides in the secreted. Its subcellular location is the extracellular space. It is found in the extracellular matrix. It catalyses the reaction Hydrolysis of (1-&gt;4)-beta-D-xylans, to remove successive D-xylose residues from the non-reducing termini.. The enzyme catalyses Hydrolysis of terminal non-reducing alpha-L-arabinofuranoside residues in alpha-L-arabinosides.. Its function is as follows. A bifunctional beta-xylosidase/alpha-L-arabinosidase, exo-enzyme that acts synergistically with endohydrolases. Releases xylose and arabinose from cell walls. Does not cleave xylan from oat spelts although xylan from oat spelts was degraded to xylose when this enzyme was used in combination with xylanase. Also releases xylose and arabinose from aryl glycosides, xylo-oligosaccharides, arabinan from sugar beet and arabino-oligosaccharides, arabinan from sugar beet and arabinoxylan from wheat. This chain is Beta-xylosidase/alpha-L-arabinofuranosidase 1, found in Medicago sativa subsp. varia (Alfalfa).